Consider the following 73-residue polypeptide: Translation initiation factor IF-1 (73 aa).

Residues Met-1–Lys-73 enclose the S1-like domain.

It belongs to the IF-1 family. Component of the 30S ribosomal translation pre-initiation complex which assembles on the 30S ribosome in the order IF-2 and IF-3, IF-1 and N-formylmethionyl-tRNA(fMet); mRNA recruitment can occur at any time during PIC assembly.

The protein resides in the cytoplasm. Functionally, one of the essential components for the initiation of protein synthesis. Stabilizes the binding of IF-2 and IF-3 on the 30S subunit to which N-formylmethionyl-tRNA(fMet) subsequently binds. Helps modulate mRNA selection, yielding the 30S pre-initiation complex (PIC). Upon addition of the 50S ribosomal subunit IF-1, IF-2 and IF-3 are released leaving the mature 70S translation initiation complex. The chain is Translation initiation factor IF-1 from Frankia alni (strain DSM 45986 / CECT 9034 / ACN14a).